We begin with the raw amino-acid sequence, 578 residues long: Zinc finger protein with KRAB and SCAN domains 8 (578 aa).

The segment at 1–20 (MAEESRKPSAPSPPDQTPEE) is disordered. Ser12 is modified (phosphoserine). Residue Lys26 forms a Glycyl lysine isopeptide (Lys-Gly) (interchain with G-Cter in SUMO2) linkage. An SCAN box domain is found at 51–133 (RLRFRQLRYQ…TLLEDLERQI (83 aa)). The disordered stretch occupies residues 158 to 205 (ASAPEPPNTQLQSEATQHKSPVPQESQERAMSTSQSPTRSQKGSSGDQ). A compositionally biased stretch (polar residues) spans 165–205 (NTQLQSEATQHKSPVPQESQERAMSTSQSPTRSQKGSSGDQ). Residues Lys176 and Lys199 each participate in a glycyl lysine isopeptide (Lys-Gly) (interchain with G-Cter in SUMO2) cross-link. Phosphoserine is present on Ser201. A KRAB domain is found at 220-316 (EKIEDMAVSL…GRLERQRGNP (97 aa)). Residues Lys221, Lys272, and Lys288 each participate in a glycyl lysine isopeptide (Lys-Gly) (interchain with G-Cter in SUMO2) cross-link. C2H2-type zinc fingers lie at residues 322–344 (HKCDECGKSFAQSSGLVRHWRIH) and 350–372 (YQCNVCGKAFSYRSALLSHQDIH). Residues Lys374 and Lys376 each participate in a glycyl lysine isopeptide (Lys-Gly) (interchain with G-Cter in SUMO2) cross-link. C2H2-type zinc fingers lie at residues 378–400 (YHCKECGKAFSQNTGLILHQRIH), 406–428 (YQCNQCGKAFSQSAGLILHQRIH), 434–456 (YECNECGKAFSHSSHLIGHQRIH), 462–484 (YECDECGKTFRRSSHLIGHQRSH), 490–512 (YKCNECGRAFSQKSGLIEHQRIH), 518–540 (YKCKECGKAFNGNTGLIQHLRIH), and 546–568 (YQCNECGKAFIQRSSLIRHQRIH). Glycyl lysine isopeptide (Lys-Gly) (interchain with G-Cter in SUMO2) cross-links involve residues Lys413 and Lys441. Lys502 participates in a covalent cross-link: Glycyl lysine isopeptide (Lys-Gly) (interchain with G-Cter in SUMO2). Lys572 participates in a covalent cross-link: Glycyl lysine isopeptide (Lys-Gly) (interchain with G-Cter in SUMO2).

Belongs to the krueppel C2H2-type zinc-finger protein family.

The protein resides in the nucleus. Functionally, may be involved in transcriptional regulation. The polypeptide is Zinc finger protein with KRAB and SCAN domains 8 (ZKSCAN8) (Homo sapiens (Human)).